A 322-amino-acid polypeptide reads, in one-letter code: Lipoyl synthase (322 aa).

Residues Cys69, Cys74, Cys80, Cys95, Cys99, Cys102, and Ser309 each contribute to the [4Fe-4S] cluster site. Positions 81–298 constitute a Radical SAM core domain; the sequence is FNHGTATFMI…GVKAKALGFD (218 aa).

The protein belongs to the radical SAM superfamily. Lipoyl synthase family. [4Fe-4S] cluster serves as cofactor.

It is found in the cytoplasm. The enzyme catalyses [[Fe-S] cluster scaffold protein carrying a second [4Fe-4S](2+) cluster] + N(6)-octanoyl-L-lysyl-[protein] + 2 oxidized [2Fe-2S]-[ferredoxin] + 2 S-adenosyl-L-methionine + 4 H(+) = [[Fe-S] cluster scaffold protein] + N(6)-[(R)-dihydrolipoyl]-L-lysyl-[protein] + 4 Fe(3+) + 2 hydrogen sulfide + 2 5'-deoxyadenosine + 2 L-methionine + 2 reduced [2Fe-2S]-[ferredoxin]. Its pathway is protein modification; protein lipoylation via endogenous pathway; protein N(6)-(lipoyl)lysine from octanoyl-[acyl-carrier-protein]: step 2/2. Functionally, catalyzes the radical-mediated insertion of two sulfur atoms into the C-6 and C-8 positions of the octanoyl moiety bound to the lipoyl domains of lipoate-dependent enzymes, thereby converting the octanoylated domains into lipoylated derivatives. The polypeptide is Lipoyl synthase (Psychromonas ingrahamii (strain DSM 17664 / CCUG 51855 / 37)).